Here is a 549-residue protein sequence, read N- to C-terminus: mRNA-capping enzyme subunit beta (549 aa).

Ser-2 is modified (N-acetylserine). Ser-15 is modified (phosphoserine). A disordered region spans residues 30–169; the sequence is LQKLSEAANG…QGNEGNIASN (140 aa). Residues 86–96 are compositionally biased toward acidic residues; that stretch reads DDEETDTDDEM. A Phosphoserine modification is found at Ser-124. A compositionally biased stretch (basic and acidic residues) spans 135–157; the sequence is AKLEKPSDDSIHQNSKSDEEQRI. Lys-223 acts as the N6-GMP-lysine intermediate in catalysis.

Belongs to the fungal TPase family. As to quaternary structure, heterodimer. The mRNA-capping enzyme is composed of two separate chains alpha and beta, respectively a mRNA guanylyltransferase and an mRNA 5'-triphosphate monophosphatase. Mg(2+) serves as cofactor.

The protein resides in the nucleus. It catalyses the reaction a 5'-end triphospho-ribonucleoside in mRNA + H2O = a 5'-end diphospho-ribonucleoside in mRNA + phosphate + H(+). In terms of biological role, first step of mRNA capping. Converts the 5'-triphosphate end of a nascent mRNA chain into a diphosphate end. The protein is mRNA-capping enzyme subunit beta (CET1) of Saccharomyces cerevisiae (strain ATCC 204508 / S288c) (Baker's yeast).